Here is a 61-residue protein sequence, read N- to C-terminus: Probable tautomerase SSP1389 (61 aa).

Pro2 functions as the Proton acceptor; via imino nitrogen in the catalytic mechanism.

This sequence belongs to the 4-oxalocrotonate tautomerase family.

The protein is Probable tautomerase SSP1389 of Staphylococcus saprophyticus subsp. saprophyticus (strain ATCC 15305 / DSM 20229 / NCIMB 8711 / NCTC 7292 / S-41).